Reading from the N-terminus, the 284-residue chain is RNase adapter protein RapZ (284 aa).

An ATP-binding site is contributed by 8-15; the sequence is GRSGSGKS. Residue 56–59 coordinates GTP; that stretch reads DVRN. The interval 266–284 is RNA-binding; that stretch reads RSRGKNVQSRHRTLEKRKT.

It belongs to the RapZ-like family. RapZ subfamily. In terms of assembly, homotrimer.

Modulates the synthesis of GlmS, by affecting the processing and stability of the regulatory small RNA GlmZ. When glucosamine-6-phosphate (GlcN6P) concentrations are high in the cell, RapZ binds GlmZ and targets it to cleavage by RNase E. Consequently, GlmZ is inactivated and unable to activate GlmS synthesis. Under low GlcN6P concentrations, RapZ is sequestered and inactivated by an other regulatory small RNA, GlmY, preventing GlmZ degradation and leading to synthesis of GlmS. This Escherichia fergusonii (strain ATCC 35469 / DSM 13698 / CCUG 18766 / IAM 14443 / JCM 21226 / LMG 7866 / NBRC 102419 / NCTC 12128 / CDC 0568-73) protein is RNase adapter protein RapZ.